The primary structure comprises 117 residues: uncharacterized protein (117 aa).

Residues Arg-96–Glu-117 form a disordered region.

This is an uncharacterized protein from Saccharomyces cerevisiae (strain ATCC 204508 / S288c) (Baker's yeast).